Reading from the N-terminus, the 215-residue chain is Ribonuclease HII (215 aa).

The 196-residue stretch at 19–214 folds into the RNase H type-2 domain; that stretch reads KNVIGVDEAG…KILETEEEKT (196 aa). Positions 25, 26, and 121 each coordinate a divalent metal cation.

The protein belongs to the RNase HII family. Requires Mn(2+) as cofactor. Mg(2+) is required as a cofactor.

The protein localises to the cytoplasm. The enzyme catalyses Endonucleolytic cleavage to 5'-phosphomonoester.. Endonuclease that specifically degrades the RNA of RNA-DNA hybrids. The polypeptide is Ribonuclease HII (Fusobacterium nucleatum subsp. nucleatum (strain ATCC 25586 / DSM 15643 / BCRC 10681 / CIP 101130 / JCM 8532 / KCTC 2640 / LMG 13131 / VPI 4355)).